The sequence spans 465 residues: MTSMASLFSFTSPAVKRLLGWKQGDEEEKWAEKAVDALVKKLKKKKGAMEELEKALSSPGQPSKCVTIPRSLDGRLQVSHRKGLPHVIYCRVWRWPDLQSHHELKPLDICEFPFGSKQKEVCINPYHYKRVESPVLPPVLVPRHNEFNPQHSLLVQFRNLSHNEPHMPQNATFPDSFHQPNNAPFPLSPNSPYPPSPASSTYPNSPASSGPGSPFQLPADTPPPAYMPPDDQMAPDNSQPMDTSSNMIPQTMPSISSRDVQPVAYEEPKHWCSIVYYELNNRVGEAFHASSTSVLVDGFTDPSNNKSRFCLGLLSNVNRNSTIENTRRHIGKGVHLYYVGGEVYAECLSDSSIFVQSRNCNFHHGFHPTTVCKIPSSCSLKIFNNQEFAQLLAQSVNHGFEAVYELTKMCTIRMSFVKGWGAEYHRQDVTSTPCWIEIHLHGPLQWLDKVLTQMGSPLNPISSVS.

The residue at position 2 (threonine 2) is an N-acetylthreonine. The 125-residue stretch at 13 to 137 (PAVKRLLGWK…YKRVESPVLP (125 aa)) folds into the MH1 domain. The Zn(2+) site is built by cysteine 65, cysteine 110, cysteine 122, and histidine 127. A disordered region spans residues 163-251 (NEPHMPQNAT…DTSSNMIPQT (89 aa)). Polar residues predominate over residues 169-182 (QNATFPDSFHQPNN). Pro residues predominate over residues 186–197 (PLSPNSPYPPSP). Low complexity predominate over residues 198–214 (ASSTYPNSPASSGPGSP). Polar residues predominate over residues 237-251 (NSQPMDTSSNMIPQT). The MH2 domain maps to 271–465 (WCSIVYYELN…SPLNPISSVS (195 aa)). Phosphoserine occurs at positions 463 and 465.

Belongs to the dwarfin/SMAD family. Homodimer. Forms trimers with the co-SMAD SMAD4. Interacts with PEBP2-alpha subunit and SMURF1. Interacts with SUV39H1 and SUV39H2. Interacts (via MH2 domain) with LEMD3. Interacts with WWP1. Interacts with TMEM119. Interacts with ZNF8. Interacts with RANBP3L. Interacts with HK1. Interacts with HGS; this interaction attenuates BMP signaling. Phosphorylated on serine by BMP (bone morphogenetic proteins) type 1 receptor kinase. Post-translationally, ubiquitin-mediated proteolysis by SMAD-specific E3 ubiquitin ligase SMURF1. In terms of tissue distribution, predominantly expressed in mesenchyme and somites during embryogenesis, and present in many tissues of the adult.

Its subcellular location is the cytoplasm. It localises to the nucleus. The protein resides in the mitochondrion. In terms of biological role, transcriptional regulator that plays a role in various cellular processes including embryonic development, cell differentiation, angiogenesis and tissue homeostasis. Upon BMP ligand binding to their receptors at the cell surface, is phosphorylated by activated type I BMP receptors (BMPRIs) and associates with SMAD4 to form a heteromeric complex which translocates into the nucleus acting as transcription factor. In turn, the hetero-trimeric complex recognizes cis-regulatory elements containing Smad Binding Elements (SBEs) to modulate the outcome of the signaling network. Non-phosphorylated SMAD5 has a cytoplasmic role in energy metabolism regulation by promoting mitochondrial respiration and glycolysis in response to cytoplasmic pH changes. Mechanistically, interacts with hexokinase 1/HK1 and thereby accelerates glycolysis. The polypeptide is Mothers against decapentaplegic homolog 5 (Smad5) (Mus musculus (Mouse)).